A 197-amino-acid polypeptide reads, in one-letter code: UPF0301 protein BAV3012 (197 aa).

It belongs to the UPF0301 (AlgH) family.

This is UPF0301 protein BAV3012 from Bordetella avium (strain 197N).